The sequence spans 324 residues: Methionyl-tRNA formyltransferase (324 aa).

A (6S)-5,6,7,8-tetrahydrofolate-binding site is contributed by 112 to 115 (SILP).

Belongs to the Fmt family.

The enzyme catalyses L-methionyl-tRNA(fMet) + (6R)-10-formyltetrahydrofolate = N-formyl-L-methionyl-tRNA(fMet) + (6S)-5,6,7,8-tetrahydrofolate + H(+). Functionally, attaches a formyl group to the free amino group of methionyl-tRNA(fMet). The formyl group appears to play a dual role in the initiator identity of N-formylmethionyl-tRNA by promoting its recognition by IF2 and preventing the misappropriation of this tRNA by the elongation apparatus. The protein is Methionyl-tRNA formyltransferase of Shewanella loihica (strain ATCC BAA-1088 / PV-4).